A 299-amino-acid polypeptide reads, in one-letter code: Oxygen-dependent coproporphyrinogen-III oxidase (299 aa).

Serine 92 lines the substrate pocket. 2 residues coordinate a divalent metal cation: histidine 96 and histidine 106. Histidine 106 functions as the Proton donor in the catalytic mechanism. 108–110 (NVR) contributes to the substrate binding site. A divalent metal cation-binding residues include histidine 145 and histidine 175. An important for dimerization region spans residues 240–275 (YVEFNLVWDRGTLFGLQTGGRTESILMSMPPLVRWE). Residue 258 to 260 (GGR) participates in substrate binding.

This sequence belongs to the aerobic coproporphyrinogen-III oxidase family. As to quaternary structure, homodimer. It depends on a divalent metal cation as a cofactor.

It localises to the cytoplasm. It carries out the reaction coproporphyrinogen III + O2 + 2 H(+) = protoporphyrinogen IX + 2 CO2 + 2 H2O. The protein operates within porphyrin-containing compound metabolism; protoporphyrin-IX biosynthesis; protoporphyrinogen-IX from coproporphyrinogen-III (O2 route): step 1/1. Its function is as follows. Involved in the heme biosynthesis. Catalyzes the aerobic oxidative decarboxylation of propionate groups of rings A and B of coproporphyrinogen-III to yield the vinyl groups in protoporphyrinogen-IX. This Salmonella choleraesuis (strain SC-B67) protein is Oxygen-dependent coproporphyrinogen-III oxidase.